The primary structure comprises 207 residues: MTARGNLFIVSAPSGAGKSSLISALLKDKPADMQVSVSHTTRAPRPGEINGQHYHFVNVEEFKALIAQNAFFEWAEVFGNYYGTSRHVIEHTLTQGIDVFLDIDWQGAQQVKAVMPEAIGVFILPPSRDELERRLTGRGQDSKDVIDSRMAQAVSEMSHYKEYDFIIVNDDFDTALADLRAIIRSQRLTGASQIHAQNDMLNDLLAG.

The Guanylate kinase-like domain maps to 5 to 184 (GNLFIVSAPS…ALADLRAIIR (180 aa)). Residue 12–19 (APSGAGKS) coordinates ATP.

The protein belongs to the guanylate kinase family.

It localises to the cytoplasm. It catalyses the reaction GMP + ATP = GDP + ADP. In terms of biological role, essential for recycling GMP and indirectly, cGMP. The sequence is that of Guanylate kinase from Shewanella oneidensis (strain ATCC 700550 / JCM 31522 / CIP 106686 / LMG 19005 / NCIMB 14063 / MR-1).